Consider the following 159-residue polypeptide: Transcription elongation factor GreA (159 aa).

This sequence belongs to the GreA/GreB family.

Necessary for efficient RNA polymerase transcription elongation past template-encoded arresting sites. The arresting sites in DNA have the property of trapping a certain fraction of elongating RNA polymerases that pass through, resulting in locked ternary complexes. Cleavage of the nascent transcript by cleavage factors such as GreA or GreB allows the resumption of elongation from the new 3'terminus. GreA releases sequences of 2 to 3 nucleotides. This is Transcription elongation factor GreA from Buchnera aphidicola subsp. Cinara cedri (strain Cc).